Here is a 233-residue protein sequence, read N- to C-terminus: Guanylate kinase (233 aa).

The Guanylate kinase-like domain maps to 3–184; the sequence is GTIFIISAPS…AVEQLRAIVL (182 aa). An ATP-binding site is contributed by 10–17; it reads APSGSGKS.

This sequence belongs to the guanylate kinase family.

It is found in the cytoplasm. The enzyme catalyses GMP + ATP = GDP + ADP. Its function is as follows. Essential for recycling GMP and indirectly, cGMP. In Koribacter versatilis (strain Ellin345), this protein is Guanylate kinase.